The sequence spans 40 residues: Dolichyl-diphosphooligosaccharide--protein glycosyltransferase subunit 4 (40 aa).

Topologically, residues 1 to 4 are lumenal; it reads MITD. Residues 5-25 form a helical membrane-spanning segment; that stretch reads VQLAIFSNVLGVFLFLLVVAY. Residues 26–40 lie on the Cytoplasmic side of the membrane; sequence HYINANTGKSIIKSK.

Belongs to the OST4 family. As to quaternary structure, component of the oligosaccharyltransferase (OST) complex.

The protein localises to the endoplasmic reticulum membrane. Functionally, subunit of the oligosaccharyl transferase (OST) complex that catalyzes the initial transfer of a defined glycan (Glc(3)Man(9)GlcNAc(2) in eukaryotes) from the lipid carrier dolichol-pyrophosphate to an asparagine residue within an Asn-X-Ser/Thr consensus motif in nascent polypeptide chains, the first step in protein N-glycosylation. N-glycosylation occurs cotranslationally and the complex associates with the Sec61 complex at the channel-forming translocon complex that mediates protein translocation across the endoplasmic reticulum (ER). All subunits are required for a maximal enzyme activity. This is Dolichyl-diphosphooligosaccharide--protein glycosyltransferase subunit 4 from Drosophila grimshawi (Hawaiian fruit fly).